The primary structure comprises 346 residues: uncharacterized protein (346 aa).

This is an uncharacterized protein from Schizosaccharomyces pombe (strain 972 / ATCC 24843) (Fission yeast).